A 292-amino-acid chain; its full sequence is Elongation factor Ts (292 aa).

Positions 80–83 are involved in Mg(2+) ion dislocation from EF-Tu; the sequence is TDFV.

It belongs to the EF-Ts family.

The protein localises to the cytoplasm. In terms of biological role, associates with the EF-Tu.GDP complex and induces the exchange of GDP to GTP. It remains bound to the aminoacyl-tRNA.EF-Tu.GTP complex up to the GTP hydrolysis stage on the ribosome. This Cupriavidus necator (strain ATCC 17699 / DSM 428 / KCTC 22496 / NCIMB 10442 / H16 / Stanier 337) (Ralstonia eutropha) protein is Elongation factor Ts.